The primary structure comprises 1003 residues: MEGQTRSGSARPGTRTGLGPLPGTHGVLQAEIPSKKVNSSFQLPAKNSGPASSEPRLTLAPVGPRAAVSPPSERPRLVLSSPRPVLAPLSIAGEQKRPPPPHSSNRAAKSVGQLVVSAAAASKPPPVASVSILAPKSLGQLVISASAMPRPSPAPLGSVLTPTSRDQKQLSPTSVGPKPALATSGLSLALASQEQPPQSPSSPSPVPSPVLSPSQEGHLAAASVTSTPASERQLPARQKDTAVPRPTPPADKCLYTPERAAGPATSPPRAQAFSDPRLSPSFRARPEAPRHSPEDPVLPPPPQTLPLDVSPGLPESGTRSPGLLSPTFRPGIPSSQTVPPPLPKPPRSPSRSPSRSPNRSPCLPPAPEVALPKPVTQAAGSGRCPSPNLQAQESPAAATTTTSPTSSWSAQPTCKSDPGFRITVVTWNVGTAMPPDDVTSLLHLGSGHDNDGADMIAIGLQEVNSMINKRLKDALFTDQWSELFMDALGPFNFVLVSTVRMQGVILLLFAKYYHLPFLRDVQTDCTRTGLGGYWGNKGGVSVRLAAFGHMLCFLNCHLPAHMDKAEQRKDNFQTILSLQQFQGPGAHGILDHDLVFWFGDLNFRIESYDLHFVKFAIDSNQLHQLWEKDQLNMAKNTWPILKGFQEGPLNFAPTFKFDVGTNKYDTSAKKRKPAWTDRILWKVKAPSGGPSPSGRESHRLQVTQHSYRSHMEYTVSDHKPVAAQFILQFAFRDDVPLVRLEVADEWARPEQAVVRYRVETVFARSSWDWIGLYRVGFRHCKDYVAYVWAKHEEVDGNIYQVTFSEESLPKGHGDFILGYYSHHHSILIGVTEPFQISLPTSESASSSTDSSGTSSEGEDDSTLELLAPKSRSPSPGKSKRHRSRSPGLARFPSLALHPSSRERRGGSRSPSPQSRQLPRVAPDRGHSSSSRGSSEEGPSGLPGPWAFPPSVPRSLGLLPALRLETVDPGGGGSWGADQEAPDPNSLSPSPQGRLGLEEGGLGP.

Disordered stretches follow at residues 1-110 (MEGQ…AAKS) and 147-414 (AMPR…QPTC). The RSXSXX motif 1 signature appears at 6-11 (RSGSAR). Residues 11–24 (RPGTRTGLGPLPGT) show a composition bias toward low complexity. An Asymmetric dimethylarginine; alternate modification is found at Arg56. The residue at position 56 (Arg56) is an Omega-N-methylarginine; alternate. At Arg65 the chain carries Omega-N-methylarginine. At Arg76 the chain carries Asymmetric dimethylarginine. Asymmetric dimethylarginine; alternate is present on Arg83. The residue at position 83 (Arg83) is an Omega-N-methylarginine; alternate. Positions 160–174 (LTPTSRDQKQLSPTS) are enriched in polar residues. Position 171 is a phosphoserine (Ser171). Residues 180–196 (ALATSGLSLALASQEQP) are compositionally biased toward low complexity. Positions 197-210 (PQSPSSPSPVPSPV) are enriched in pro residues. The span at 284–294 (ARPEAPRHSPE) shows a compositional bias: basic and acidic residues. Phosphoserine occurs at positions 292 and 325. Residues 338 to 348 (VPPPLPKPPRS) show a composition bias toward pro residues. Residues 346 to 351 (PRSPSR) carry the SH3-binding motif. Low complexity-rich tracts occupy residues 349–361 (PSRS…NRSP) and 390–413 (QAQE…AQPT). The RSXSXX motif 2 motif lies at 351 to 356 (RSPSRS). Residues 422–725 (ITVVTWNVGT…SDHKPVAAQF (304 aa)) are catalytic. The interval 726 to 837 (ILQFAFRDDV…IGVTEPFQIS (112 aa)) is required for ruffle localization. Positions 839–1003 (PTSESASSST…LGLEEGGLGP (165 aa)) are disordered. Over residues 840–855 (TSESASSSTDSSGTSS) the composition is skewed to low complexity. 2 short sequence motifs (RSXSXX motif) span residues 871 to 876 (RSPSPG) and 882 to 887 (RSRSPG). Ser900 carries the post-translational modification Phosphoserine. Low complexity-rich tracts occupy residues 907–919 (SRSP…QLPR) and 927–943 (SSSS…GLPG). Residues 908 to 913 (RSPSPQ) carry the RSXSXX motif 5 motif. Ser987 is subject to Phosphoserine.

Belongs to the inositol 1,4,5-trisphosphate 5-phosphatase type II family.

It localises to the cytoplasm. The enzyme catalyses 1D-myo-inositol 1,4,5-trisphosphate + H2O = 1D-myo-inositol 1,4-bisphosphate + phosphate. It carries out the reaction 1D-myo-inositol 1,3,4,5-tetrakisphosphate + H2O = 1D-myo-inositol 1,3,4-trisphosphate + phosphate. It catalyses the reaction a 1,2-diacyl-sn-glycero-3-phospho-(1D-myo-inositol-4,5-bisphosphate) + H2O = a 1,2-diacyl-sn-glycero-3-phospho-(1D-myo-inositol 4-phosphate) + phosphate. Inositol 5-phosphatase, which converts inositol 1,4,5-trisphosphate to inositol 1,4-bisphosphate. Also converts phosphatidylinositol 4,5-bisphosphate to phosphatidylinositol 4-phosphate and inositol 1,3,4,5-tetrakisphosphate to inositol 1,3,4-trisphosphate in vitro. May be involved in modulation of the function of inositol and phosphatidylinositol polyphosphate-binding proteins that are present at membranes ruffles. The protein is Phosphatidylinositol 4,5-bisphosphate 5-phosphatase A (Inpp5j) of Mus musculus (Mouse).